The following is a 450-amino-acid chain: tRNA modification GTPase MnmE (450 aa).

(6S)-5-formyl-5,6,7,8-tetrahydrofolate contacts are provided by Arg23, Glu80, and Arg123. Residues 219 to 372 enclose the TrmE-type G domain; the sequence is GLHVVLAGQP…LRARLLQMAG (154 aa). Asn229 lines the K(+) pocket. GTP contacts are provided by residues 229–234, 248–254, and 273–276; these read NVGKSS, TPIAGTT, and DTAG. Position 233 (Ser233) interacts with Mg(2+). K(+) contacts are provided by Thr248, Ile250, and Thr253. Thr254 is a binding site for Mg(2+). (6S)-5-formyl-5,6,7,8-tetrahydrofolate is bound at residue Lys450.

This sequence belongs to the TRAFAC class TrmE-Era-EngA-EngB-Septin-like GTPase superfamily. TrmE GTPase family. Homodimer. Heterotetramer of two MnmE and two MnmG subunits. K(+) serves as cofactor.

The protein localises to the cytoplasm. In terms of biological role, exhibits a very high intrinsic GTPase hydrolysis rate. Involved in the addition of a carboxymethylaminomethyl (cmnm) group at the wobble position (U34) of certain tRNAs, forming tRNA-cmnm(5)s(2)U34. This Bordetella avium (strain 197N) protein is tRNA modification GTPase MnmE.